The following is a 155-amino-acid chain: 6,7-dimethyl-8-ribityllumazine synthase (155 aa).

Residues tryptophan 24, 58-60, and 82-84 contribute to the 5-amino-6-(D-ribitylamino)uracil site; these read AFE and AVI. 87–88 contacts (2S)-2-hydroxy-3-oxobutyl phosphate; it reads GT. Histidine 90 acts as the Proton donor in catalysis. Residue phenylalanine 115 participates in 5-amino-6-(D-ribitylamino)uracil binding. Arginine 129 provides a ligand contact to (2S)-2-hydroxy-3-oxobutyl phosphate.

This sequence belongs to the DMRL synthase family. Forms an icosahedral capsid composed of 60 subunits, arranged as a dodecamer of pentamers.

It carries out the reaction (2S)-2-hydroxy-3-oxobutyl phosphate + 5-amino-6-(D-ribitylamino)uracil = 6,7-dimethyl-8-(1-D-ribityl)lumazine + phosphate + 2 H2O + H(+). The protein operates within cofactor biosynthesis; riboflavin biosynthesis; riboflavin from 2-hydroxy-3-oxobutyl phosphate and 5-amino-6-(D-ribitylamino)uracil: step 1/2. Its function is as follows. Catalyzes the formation of 6,7-dimethyl-8-ribityllumazine by condensation of 5-amino-6-(D-ribitylamino)uracil with 3,4-dihydroxy-2-butanone 4-phosphate. This is the penultimate step in the biosynthesis of riboflavin. The sequence is that of 6,7-dimethyl-8-ribityllumazine synthase from Saccharophagus degradans (strain 2-40 / ATCC 43961 / DSM 17024).